The sequence spans 516 residues: MQEVPIVILDFGSQYTQLIARRLREVGVYCEIYPFFEPIENIRAKKPQGIILSGGPASVYEPDAPRVDKAIYELGIPVLGICYGMQLITVDFGGQVVRALEHEYGKAKLYFDPIHGKVCPLFEGTKDGQIVWMSHGDKVTELPAGFIRIAHTDNSPYAAIANEEKQIYALQFHPEVSHSQEGQKILENFARKICGITSKWDMGHFAKEQIEKIRQRVGEDKVLCALSGGVDSSVVTALLYEAIGDKLIPVFVDNGLLREGEREKVEYVFKNMLKVPLIVVDAKERFLNALQGITDPEQKRKIIGHTFIEVFEEEAKKHTDVKYLAQGTLYPDVIESVSVKGPSETIKSHHNVGGLPDWMKFELIEPLRELFKDEVRKLGLELGLPREMVYRHPFPGPGLAIRILGEVNEEALDLVRKADTILLEEIKAHGLYEKLWQSFAVLLNVKSVGVMGDKRTYENTVALRIVESSDGMTATFAHIPHDLLELISNRIINEVDGINRVVYDITSKPPGTIEWE.

The Glutamine amidotransferase type-1 domain occupies P5–K199. The active-site Nucleophile is C82. Catalysis depends on residues H173 and E175. Residues W200–R391 form the GMPS ATP-PPase domain. Residue S227 to S233 participates in ATP binding.

Homodimer.

It catalyses the reaction XMP + L-glutamine + ATP + H2O = GMP + L-glutamate + AMP + diphosphate + 2 H(+). It functions in the pathway purine metabolism; GMP biosynthesis; GMP from XMP (L-Gln route): step 1/1. In terms of biological role, catalyzes the synthesis of GMP from XMP. The polypeptide is GMP synthase [glutamine-hydrolyzing] (Nitratiruptor sp. (strain SB155-2)).